A 690-amino-acid chain; its full sequence is NF-kappa-B-repressing factor (690 aa).

The segment at 1-296 is active repression domain; the sequence is MEKILQMAEG…FKHTFGEDLV (296 aa). The Nuclear localization signal signature appears at 25–45; the sequence is KPSKGQKRHLSTCDGQNPPKK. Disordered regions lie at residues 27-87 and 132-163; these read SKGQ…NEQT and MYFD…QTFP. Lysine 68 participates in a covalent cross-link: Glycyl lysine isopeptide (Lys-Gly) (interchain with G-Cter in SUMO2). Residues 142–163 are compositionally biased toward low complexity; it reads STTSQQANSQSTPEPSPSQTFP. A DNA-binding region spans residues 296–388; that stretch reads VVCQIGMSSY…RVFLQDHCLA (93 aa). The span at 414–431 shows a compositional bias: polar residues; the sequence is PTYPSVKSSQCHTGSSPR. A disordered region spans residues 414 to 437; the sequence is PTYPSVKSSQCHTGSSPRGSGKKK. Lysine 500 participates in a covalent cross-link: Glycyl lysine isopeptide (Lys-Gly) (interchain with G-Cter in SUMO2). A G-patch domain is found at 551 to 596; that stretch reads EDNIGNQLLRKMGWTGGGLGKSGEGIREPISVKEQHKREGLGLDVE. One can recognise an R3H domain in the interval 600–664; sequence KIAKRDIEQI…DRYLVVGRKR (65 aa). A Phosphoserine modification is found at serine 618. Residues lysine 666 and lysine 674 each participate in a glycyl lysine isopeptide (Lys-Gly) (interchain with G-Cter in SUMO2) cross-link.

In terms of assembly, interacts with NF-kappa-B. Interacts with XRN2. Interacts (via G-patch domain) with DHX15; promoting the RNA helicase activity of DHX15. In terms of tissue distribution, widely and constitutively expressed. Expressed at lower level in colon, peripheral blood lymphocytes, lung and kidney.

The protein resides in the nucleus. It is found in the nucleolus. In terms of biological role, enhances the ATPase activity of DHX15 by acting like a brace that tethers mobile sections of DHX15 together, stabilizing a functional conformation with high RNA affinity of DHX15. Involved in the constitutive silencing of the interferon beta promoter, independently of the virus-induced signals, and in the inhibition of the basal and cytokine-induced iNOS promoter activity. Also involved in the regulation of IL-8 transcription. May also act as a DNA-binding transcription regulator: interacts with a specific negative regulatory element (NRE) 5'-AATTCCTCTGA-3' to mediate transcriptional repression of certain NK-kappa-B responsive genes. In Homo sapiens (Human), this protein is NF-kappa-B-repressing factor.